The primary structure comprises 428 residues: Secernin-2 (428 aa).

Residue cysteine 10 is part of the active site.

The protein belongs to the peptidase C69 family. Secernin subfamily.

The polypeptide is Secernin-2 (scrn2) (Xenopus laevis (African clawed frog)).